The chain runs to 448 residues: Bifunctional protein GlmU (448 aa).

Residues 1-232 form a pyrophosphorylase region; the sequence is MSDRSLLVVV…ADEVAGVNSR (232 aa). UDP-N-acetyl-alpha-D-glucosamine contacts are provided by residues 11–14, Lys-25, Gln-78, and 83–84; these read LAAG and GT. Position 108 (Asp-108) interacts with Mg(2+). Positions 144, 158, 173, and 230 each coordinate UDP-N-acetyl-alpha-D-glucosamine. Asn-230 contributes to the Mg(2+) binding site. A linker region spans residues 233–253; that stretch reads VQLAEAEAILQRRLRLAAMAG. The N-acetyltransferase stretch occupies residues 254–448; sequence GATLVAPETV…FRAARSKPKG (195 aa). Arg-319 and Lys-337 together coordinate UDP-N-acetyl-alpha-D-glucosamine. The active-site Proton acceptor is His-349. Residues Tyr-352 and Asn-363 each coordinate UDP-N-acetyl-alpha-D-glucosamine. Residues Ala-366, 372–373, Thr-409, and Arg-426 contribute to the acetyl-CoA site; that span reads NY.

It in the N-terminal section; belongs to the N-acetylglucosamine-1-phosphate uridyltransferase family. This sequence in the C-terminal section; belongs to the transferase hexapeptide repeat family. As to quaternary structure, homotrimer. Requires Mg(2+) as cofactor.

Its subcellular location is the cytoplasm. The enzyme catalyses alpha-D-glucosamine 1-phosphate + acetyl-CoA = N-acetyl-alpha-D-glucosamine 1-phosphate + CoA + H(+). The catalysed reaction is N-acetyl-alpha-D-glucosamine 1-phosphate + UTP + H(+) = UDP-N-acetyl-alpha-D-glucosamine + diphosphate. The protein operates within nucleotide-sugar biosynthesis; UDP-N-acetyl-alpha-D-glucosamine biosynthesis; N-acetyl-alpha-D-glucosamine 1-phosphate from alpha-D-glucosamine 6-phosphate (route II): step 2/2. Its pathway is nucleotide-sugar biosynthesis; UDP-N-acetyl-alpha-D-glucosamine biosynthesis; UDP-N-acetyl-alpha-D-glucosamine from N-acetyl-alpha-D-glucosamine 1-phosphate: step 1/1. It functions in the pathway bacterial outer membrane biogenesis; LPS lipid A biosynthesis. Its function is as follows. Catalyzes the last two sequential reactions in the de novo biosynthetic pathway for UDP-N-acetylglucosamine (UDP-GlcNAc). The C-terminal domain catalyzes the transfer of acetyl group from acetyl coenzyme A to glucosamine-1-phosphate (GlcN-1-P) to produce N-acetylglucosamine-1-phosphate (GlcNAc-1-P), which is converted into UDP-GlcNAc by the transfer of uridine 5-monophosphate (from uridine 5-triphosphate), a reaction catalyzed by the N-terminal domain. This is Bifunctional protein GlmU from Xanthobacter autotrophicus (strain ATCC BAA-1158 / Py2).